Here is a 449-residue protein sequence, read N- to C-terminus: Histidinol dehydrogenase (449 aa).

Residues Tyr-136, Gln-204, and Asn-232 each contribute to the NAD(+) site. Substrate is bound by residues Thr-255, Gln-277, and His-280. Gln-277 and His-280 together coordinate Zn(2+). Residues Glu-346 and His-347 each act as proton acceptor in the active site. His-347, Asp-380, Glu-434, and His-439 together coordinate substrate. A Zn(2+)-binding site is contributed by Asp-380. His-439 contacts Zn(2+).

This sequence belongs to the histidinol dehydrogenase family. Zn(2+) serves as cofactor.

It catalyses the reaction L-histidinol + 2 NAD(+) + H2O = L-histidine + 2 NADH + 3 H(+). It participates in amino-acid biosynthesis; L-histidine biosynthesis; L-histidine from 5-phospho-alpha-D-ribose 1-diphosphate: step 9/9. Functionally, catalyzes the sequential NAD-dependent oxidations of L-histidinol to L-histidinaldehyde and then to L-histidine. This chain is Histidinol dehydrogenase (hisD), found in Mycobacterium leprae (strain TN).